A 352-amino-acid polypeptide reads, in one-letter code: UDP-3-O-acylglucosamine N-acyltransferase (352 aa).

His257 (proton acceptor) is an active-site residue.

It belongs to the transferase hexapeptide repeat family. LpxD subfamily. As to quaternary structure, homotrimer.

The enzyme catalyses a UDP-3-O-[(3R)-3-hydroxyacyl]-alpha-D-glucosamine + a (3R)-hydroxyacyl-[ACP] = a UDP-2-N,3-O-bis[(3R)-3-hydroxyacyl]-alpha-D-glucosamine + holo-[ACP] + H(+). Its pathway is bacterial outer membrane biogenesis; LPS lipid A biosynthesis. Functionally, catalyzes the N-acylation of UDP-3-O-acylglucosamine using 3-hydroxyacyl-ACP as the acyl donor. Is involved in the biosynthesis of lipid A, a phosphorylated glycolipid that anchors the lipopolysaccharide to the outer membrane of the cell. The sequence is that of UDP-3-O-acylglucosamine N-acyltransferase from Methylobacterium sp. (strain 4-46).